The following is a 124-amino-acid chain: Apolipoprotein C-IV (124 aa).

The N-terminal stretch at 1-27 is a signal peptide; that stretch reads MLLPRRGLRTLPSLCLYILVLVWVVAC.

Belongs to the apolipoprotein C4 family. In terms of processing, glycosylated; contains sialic acid. Present in up to five sialylated isoforms. In terms of tissue distribution, blood plasma, associated primarily with VLDL and HDL. Expressed mainly in the liver.

Its subcellular location is the secreted. In terms of biological role, may participate in lipoprotein metabolism. The sequence is that of Apolipoprotein C-IV (APOC4) from Oryctolagus cuniculus (Rabbit).